The following is a 270-amino-acid chain: Acetylglutamate kinase (270 aa).

Substrate contacts are provided by residues 53–54, Arg-75, and Asn-167; that span reads GG.

Belongs to the acetylglutamate kinase family. ArgB subfamily.

It localises to the cytoplasm. The enzyme catalyses N-acetyl-L-glutamate + ATP = N-acetyl-L-glutamyl 5-phosphate + ADP. Its pathway is amino-acid biosynthesis; L-arginine biosynthesis; N(2)-acetyl-L-ornithine from L-glutamate: step 2/4. Its function is as follows. Catalyzes the ATP-dependent phosphorylation of N-acetyl-L-glutamate. This chain is Acetylglutamate kinase, found in Shewanella halifaxensis (strain HAW-EB4).